Reading from the N-terminus, the 216-residue chain is Imidazole glycerol phosphate synthase subunit HisH (216 aa).

The Glutamine amidotransferase type-1 domain maps to 2-216 (RVAIIDYGSG…FIANFLKWKP (215 aa)). Cysteine 88 serves as the catalytic Nucleophile. Catalysis depends on residues histidine 196 and glutamate 198.

In terms of assembly, heterodimer of HisH and HisF.

The protein localises to the cytoplasm. It carries out the reaction 5-[(5-phospho-1-deoxy-D-ribulos-1-ylimino)methylamino]-1-(5-phospho-beta-D-ribosyl)imidazole-4-carboxamide + L-glutamine = D-erythro-1-(imidazol-4-yl)glycerol 3-phosphate + 5-amino-1-(5-phospho-beta-D-ribosyl)imidazole-4-carboxamide + L-glutamate + H(+). The catalysed reaction is L-glutamine + H2O = L-glutamate + NH4(+). The protein operates within amino-acid biosynthesis; L-histidine biosynthesis; L-histidine from 5-phospho-alpha-D-ribose 1-diphosphate: step 5/9. Its function is as follows. IGPS catalyzes the conversion of PRFAR and glutamine to IGP, AICAR and glutamate. The HisH subunit catalyzes the hydrolysis of glutamine to glutamate and ammonia as part of the synthesis of IGP and AICAR. The resulting ammonia molecule is channeled to the active site of HisF. This chain is Imidazole glycerol phosphate synthase subunit HisH, found in Brucella melitensis biotype 1 (strain ATCC 23456 / CCUG 17765 / NCTC 10094 / 16M).